A 459-amino-acid chain; its full sequence is MQPATLQWSSYVLQLRLTTAAILKPGELRYFKCGLGICPPSSSVVCTCRDESSFAASPFTYIDPKDYGNIPFAVHNISDLDLDLGRLPIVLNIFALPYANVTVSNLPVQRIEAYDRHAIPHGQCEAQFILYGPLTRIKIYAADIRWTEKTPEEPTRYLFNADIWINLQNTPLDQIFNSAKIEFISHRHVSISRILLCGNLLILKTVYENDYLLDDTFFPEKLNIQLSLTPHTADITMSQNQETLLKCNVGSITVGATKNIVSNLITPFHCSFHTIFESNSNFTGFFIPKLLHGISITTCIWDETRPLYITMKAQKKNCRINYSQELGKVFFFPKQILPPGNNIEFSWTEMSNIYVNIESPNGPVKDIVALASQPVSRAPSLTTVAHVTPEISMGIFLKSLRIAFDKEHLVPLHFFLKPGESTRMEFMPPETPQSLTILEGDVGIRFIPCHNNYSHRSSP.

The first 20 residues, 1 to 20, serve as a signal peptide directing secretion; that stretch reads MQPATLQWSSYVLQLRLTTA. Residues Asn-76, Asn-100, Asn-281, Asn-321, and Asn-452 are each glycosylated (N-linked (GlcNAc...) asparagine; by host).

Belongs to the herpesviridae UL82 family.

This Homo sapiens (Human) protein is Protein U54 (U54).